The following is an 87-amino-acid chain: Kappa 1a-bungarotoxin (87 aa).

The first 21 residues, 1-21 (MKTLLLTLVVVTIVCLDLGYT), serve as a signal peptide directing secretion. Cystine bridges form between Cys-24-Cys-42, Cys-35-Cys-63, Cys-48-Cys-52, Cys-67-Cys-79, and Cys-80-Cys-85.

This sequence belongs to the three-finger toxin family. Long-chain subfamily. Kappa-neurotoxin sub-subfamily. Homo- and heterodimer; non-covalently linked. As to expression, expressed by the venom gland.

The protein resides in the secreted. In terms of biological role, postsynaptic neurotoxin that binds and inhibits neuronal nicotinic acetylcholine receptors (nAChR) with high affinity (IC(50)&lt;100 nM). Is a selective, and slowly reversible antagonist of alpha-3/CHRNA3-containing and some alpha-4/CHRNA4-containing AChRs. This Bungarus candidus (Malayan krait) protein is Kappa 1a-bungarotoxin.